Consider the following 495-residue polypeptide: Probable cytochrome P450 508C1 (495 aa).

The helical transmembrane segment at leucine 3 to isoleucine 21 threads the bilayer. Cysteine 442 is a binding site for heme.

Belongs to the cytochrome P450 family. Heme serves as cofactor.

Its subcellular location is the membrane. In Dictyostelium discoideum (Social amoeba), this protein is Probable cytochrome P450 508C1 (cyp508C1).